The chain runs to 118 residues: Phospholipase A2 'basic' (118 aa).

Intrachain disulfides connect Cys-11-Cys-70, Cys-26-Cys-117, Cys-28-Cys-44, Cys-43-Cys-98, Cys-50-Cys-91, Cys-59-Cys-84, and Cys-77-Cys-89. Residues Tyr-27, Gly-29, and Gly-31 each coordinate Ca(2+). His-47 is a catalytic residue. A Ca(2+)-binding site is contributed by Asp-48. Residues 52–69 (EKAGKMGCWPYLTLYKYK) carry the Coagulation factor Xa binding motif motif. The active site involves Asp-92.

This sequence belongs to the phospholipase A2 family. Group I subfamily. D49 sub-subfamily. Ca(2+) is required as a cofactor. As to expression, expressed by the venom gland.

Its subcellular location is the secreted. The catalysed reaction is a 1,2-diacyl-sn-glycero-3-phosphocholine + H2O = a 1-acyl-sn-glycero-3-phosphocholine + a fatty acid + H(+). In terms of biological role, snake venom phospholipase A2 (PLA2) that shows strong anticoagulant activity. Binds directly with the coagulation factor FXa (F10) and blocks the formation of the prothombinase complex. Acts by a nonenzymatic mechanism. Also inhibits the complex composed of tissue factor (F3) and coagulation factor VIIa (F7) (TF-VIIa complex) by both enzymatic and nonenzymatic mechanisms. PLA2 catalyzes the calcium-dependent hydrolysis of the 2-acyl groups in 3-sn-phosphoglycerides. The polypeptide is Phospholipase A2 'basic' (Naja nigricollis (Black-necked spitting cobra)).